Here is a 273-residue protein sequence, read N- to C-terminus: Glutamate racemase (273 aa).

Residues 17 to 18 (DS) and 49 to 50 (YG) each bind substrate. Cys80 (proton donor/acceptor) is an active-site residue. 81–82 (NT) contributes to the substrate binding site. Cys190 serves as the catalytic Proton donor/acceptor. Position 191–192 (191–192 (TH)) interacts with substrate.

This sequence belongs to the aspartate/glutamate racemases family.

It catalyses the reaction L-glutamate = D-glutamate. Its pathway is cell wall biogenesis; peptidoglycan biosynthesis. Provides the (R)-glutamate required for cell wall biosynthesis. The sequence is that of Glutamate racemase from Corynebacterium glutamicum (strain ATCC 13032 / DSM 20300 / JCM 1318 / BCRC 11384 / CCUG 27702 / LMG 3730 / NBRC 12168 / NCIMB 10025 / NRRL B-2784 / 534).